Consider the following 414-residue polypeptide: Argininosuccinate synthase (414 aa).

Residues 9 to 17 and Ala-35 each bind ATP; that span reads AYSGGLDTS. L-citrulline contacts are provided by Tyr-86 and Ser-91. Residue 114–122 participates in ATP binding; it reads SHGATGKGN. Residues Thr-118, Asn-122, and Asp-123 each coordinate L-aspartate. Position 122 (Asn-122) interacts with L-citrulline. L-citrulline-binding residues include Arg-126, Ser-179, Ser-188, Glu-269, and Tyr-281.

The protein belongs to the argininosuccinate synthase family. As to quaternary structure, homotetramer.

It localises to the cytoplasm. It is found in the cytosol. The catalysed reaction is L-citrulline + L-aspartate + ATP = 2-(N(omega)-L-arginino)succinate + AMP + diphosphate + H(+). It participates in amino-acid biosynthesis; L-arginine biosynthesis; L-arginine from L-ornithine and carbamoyl phosphate: step 2/3. It functions in the pathway nitrogen metabolism; urea cycle; (N(omega)-L-arginino)succinate from L-aspartate and L-citrulline: step 1/1. One of the enzymes of the urea cycle, the metabolic pathway transforming neurotoxic amonia produced by protein catabolism into inocuous urea in the liver of ureotelic animals. Catalyzes the formation of arginosuccinate from aspartate, citrulline and ATP and together with ASL it is responsible for the biosynthesis of arginine in most body tissues. The chain is Argininosuccinate synthase from Danio rerio (Zebrafish).